Consider the following 521-residue polypeptide: Bifunctional purine biosynthesis protein PurH (521 aa).

The region spanning 1 to 145 (MIKQALISVS…KNHRDVTVVV (145 aa)) is the MGS-like domain.

It belongs to the PurH family.

The catalysed reaction is (6R)-10-formyltetrahydrofolate + 5-amino-1-(5-phospho-beta-D-ribosyl)imidazole-4-carboxamide = 5-formamido-1-(5-phospho-D-ribosyl)imidazole-4-carboxamide + (6S)-5,6,7,8-tetrahydrofolate. It catalyses the reaction IMP + H2O = 5-formamido-1-(5-phospho-D-ribosyl)imidazole-4-carboxamide. Its pathway is purine metabolism; IMP biosynthesis via de novo pathway; 5-formamido-1-(5-phospho-D-ribosyl)imidazole-4-carboxamide from 5-amino-1-(5-phospho-D-ribosyl)imidazole-4-carboxamide (10-formyl THF route): step 1/1. It participates in purine metabolism; IMP biosynthesis via de novo pathway; IMP from 5-formamido-1-(5-phospho-D-ribosyl)imidazole-4-carboxamide: step 1/1. The sequence is that of Bifunctional purine biosynthesis protein PurH from Burkholderia ambifaria (strain ATCC BAA-244 / DSM 16087 / CCUG 44356 / LMG 19182 / AMMD) (Burkholderia cepacia (strain AMMD)).